The following is a 198-amino-acid chain: Putative transposase InsO for insertion sequence element IS911B (198 aa).

One can recognise an Integrase catalytic domain in the interval 105 to 198; that stretch reads AVTEPNQVWC…YCGDTGSGRV (94 aa).

Functionally, involved in the transposition of the insertion sequence IS911B. In Escherichia coli (strain K12), this protein is Putative transposase InsO for insertion sequence element IS911B (insO2).